The sequence spans 197 residues: dTTP/UTP pyrophosphatase (197 aa).

Residue Asp70 is the Proton acceptor of the active site.

Belongs to the Maf family. YhdE subfamily. The cofactor is a divalent metal cation.

The protein resides in the cytoplasm. It catalyses the reaction dTTP + H2O = dTMP + diphosphate + H(+). It carries out the reaction UTP + H2O = UMP + diphosphate + H(+). Nucleoside triphosphate pyrophosphatase that hydrolyzes dTTP and UTP. May have a dual role in cell division arrest and in preventing the incorporation of modified nucleotides into cellular nucleic acids. The protein is dTTP/UTP pyrophosphatase of Yersinia pestis bv. Antiqua (strain Antiqua).